Consider the following 293-residue polypeptide: 5'-3' exoribonuclease Rnm (293 aa).

H13, H15, D20, H45, E72, H83, H198, D255, and H257 together coordinate Mn(2+).

This sequence belongs to the PHP family. TrpH/YciV subfamily. Mn(2+) is required as a cofactor.

The enzyme catalyses a ribonucleoside 3',5'-bisphosphate + H2O = a ribonucleoside 5'-phosphate + phosphate. Functionally, exoribonuclease that catalyzes the last steps of 5S, 16S and 23S rRNA 5'-end maturation. Removes 3 nucleotides (nt) from the 5' end of 5S, 16S and 23S rRNA precursors to generate the mature 5' ends. Precursors with longer extensions are not processed (7 nt at the 5' end of pre-23S rRNA or 66 nt at the 5'-end of 16S rRNA are not processed). 5S and 23S rRNA maturation occurs more efficiently and accurately on ribosomal particles as compared to free RNA; the enzyme overdigests free RNA but generates the correct 5'-end in ribosomes from rnm deletion strains. Efficiently catalyzes the hydrolysis of the 3'-phosphate from 3',5'-bis-phosphonucleotides as well as the successive hydrolysis of 5'-phosphomononucleotides from the 5'-end of short pieces of RNA and DNA, with no specificity toward the identity of the nucleotide base. Is more efficient at hydrolyzing RNA oligonucleotides than DNA oligonucleotides. This enzyme can also hydrolyze annealed DNA duplexes, albeit at a catalytic efficiency approximately 10-fold lower than that of the corresponding single-stranded oligonucleotides. This is 5'-3' exoribonuclease Rnm from Escherichia coli (strain K12).